We begin with the raw amino-acid sequence, 345 residues long: UDP-3-O-acylglucosamine N-acyltransferase 3 (345 aa).

Catalysis depends on His236, which acts as the Proton acceptor.

It belongs to the transferase hexapeptide repeat family. LpxD subfamily. Homotrimer.

The enzyme catalyses a UDP-3-O-[(3R)-3-hydroxyacyl]-alpha-D-glucosamine + a (3R)-hydroxyacyl-[ACP] = a UDP-2-N,3-O-bis[(3R)-3-hydroxyacyl]-alpha-D-glucosamine + holo-[ACP] + H(+). It participates in bacterial outer membrane biogenesis; LPS lipid A biosynthesis. Its function is as follows. Catalyzes the N-acylation of UDP-3-O-acylglucosamine using 3-hydroxyacyl-ACP as the acyl donor. Is involved in the biosynthesis of lipid A, a phosphorylated glycolipid that anchors the lipopolysaccharide to the outer membrane of the cell. This is UDP-3-O-acylglucosamine N-acyltransferase 3 from Gloeobacter violaceus (strain ATCC 29082 / PCC 7421).